Reading from the N-terminus, the 102-residue chain is Small ribosomal subunit protein uS10 (102 aa).

Belongs to the universal ribosomal protein uS10 family. Part of the 30S ribosomal subunit.

Involved in the binding of tRNA to the ribosomes. The chain is Small ribosomal subunit protein uS10 from Clostridium perfringens (strain ATCC 13124 / DSM 756 / JCM 1290 / NCIMB 6125 / NCTC 8237 / Type A).